The primary structure comprises 473 residues: Photosystem II CP43 reaction center protein (473 aa).

Residues 1-14 (MKTLYSLRRYFHVE) constitute a propeptide that is removed on maturation. The residue at position 15 (Thr15) is an N-acetylthreonine. Thr15 is modified (phosphothreonine). The next 5 helical transmembrane spans lie at 69–93 (LFEV…PHLA), 134–155 (LIGP…KDKN), 178–200 (KAMY…RVIS), 255–275 (KPFA…LSYS), and 291–312 (WFNN…ASQA). Position 367 (Glu367) interacts with [CaMn4O5] cluster. A helical transmembrane segment spans residues 447-471 (RARAAAAGFEKGIDRDTEPVLSMRP).

This sequence belongs to the PsbB/PsbC family. PsbC subfamily. As to quaternary structure, PSII is composed of 1 copy each of membrane proteins PsbA, PsbB, PsbC, PsbD, PsbE, PsbF, PsbH, PsbI, PsbJ, PsbK, PsbL, PsbM, PsbT, PsbX, PsbY, PsbZ, Psb30/Ycf12, at least 3 peripheral proteins of the oxygen-evolving complex and a large number of cofactors. It forms dimeric complexes. Binds multiple chlorophylls and provides some of the ligands for the Ca-4Mn-5O cluster of the oxygen-evolving complex. It may also provide a ligand for a Cl- that is required for oxygen evolution. PSII binds additional chlorophylls, carotenoids and specific lipids. serves as cofactor.

The protein localises to the plastid. Its subcellular location is the chloroplast thylakoid membrane. In terms of biological role, one of the components of the core complex of photosystem II (PSII). It binds chlorophyll and helps catalyze the primary light-induced photochemical processes of PSII. PSII is a light-driven water:plastoquinone oxidoreductase, using light energy to abstract electrons from H(2)O, generating O(2) and a proton gradient subsequently used for ATP formation. The sequence is that of Photosystem II CP43 reaction center protein from Ostreococcus tauri.